The chain runs to 344 residues: Anthranilate phosphoribosyltransferase (344 aa).

Residues Gly80, Gly83–Asp84, Thr88, Asn90–Thr93, Lys108–Ser116, and Ser120 each bind 5-phospho-alpha-D-ribose 1-diphosphate. Gly80 contributes to the anthranilate binding site. Ser92 is a Mg(2+) binding site. Asn111 contributes to the anthranilate binding site. Arg166 is an anthranilate binding site. Mg(2+) contacts are provided by Asp225 and Glu226.

It belongs to the anthranilate phosphoribosyltransferase family. Homodimer. Requires Mg(2+) as cofactor.

The enzyme catalyses N-(5-phospho-beta-D-ribosyl)anthranilate + diphosphate = 5-phospho-alpha-D-ribose 1-diphosphate + anthranilate. Its pathway is amino-acid biosynthesis; L-tryptophan biosynthesis; L-tryptophan from chorismate: step 2/5. Functionally, catalyzes the transfer of the phosphoribosyl group of 5-phosphorylribose-1-pyrophosphate (PRPP) to anthranilate to yield N-(5'-phosphoribosyl)-anthranilate (PRA). This is Anthranilate phosphoribosyltransferase from Petrotoga mobilis (strain DSM 10674 / SJ95).